The chain runs to 96 residues: Large ribosomal subunit protein bL21 (96 aa).

The protein belongs to the bacterial ribosomal protein bL21 family. As to quaternary structure, part of the 50S ribosomal subunit. Contacts protein L20.

In terms of biological role, this protein binds to 23S rRNA in the presence of protein L20. This is Large ribosomal subunit protein bL21 from Sulfurihydrogenibium sp. (strain YO3AOP1).